The chain runs to 153 residues: 17.6 kDa class I heat shock protein (153 aa).

The sHSP domain occupies 38-153 (ETAAIVNARI…PMVKAIDISG (116 aa)).

Belongs to the small heat shock protein (HSP20) family. In terms of assembly, forms oligomeric structures.

The protein resides in the cytoplasm. The polypeptide is 17.6 kDa class I heat shock protein (HSP17.6) (Helianthus annuus (Common sunflower)).